A 208-amino-acid polypeptide reads, in one-letter code: Guanylate kinase (208 aa).

The Guanylate kinase-like domain occupies Gly-4–Arg-184. An ATP-binding site is contributed by Ala-11–Ser-18.

Belongs to the guanylate kinase family.

Its subcellular location is the cytoplasm. The catalysed reaction is GMP + ATP = GDP + ADP. Essential for recycling GMP and indirectly, cGMP. The sequence is that of Guanylate kinase from Photobacterium profundum (strain SS9).